The primary structure comprises 827 residues: Putative potassium transporter 12 (827 aa).

The segment at 1–31 is disordered; the sequence is MEEIEEGSSNNSIRRVGTGSSDRRWVDGSEV. Over 1-82 the chain is Cytoplasmic; the sequence is MEEIEEGSSN…AGSHGHNLKD (82 aa). Residues 83 to 103 traverse the membrane as a helical segment; sequence LSLLTTLGIAFQTLGVVYGDM. Topologically, residues 104 to 129 are extracellular; that stretch reads GTSPLYVFSDVFSKVPIRSEVDVLGA. A helical membrane pass occupies residues 130–150; it reads LSLVIYTIAVIPLAKYVFVVL. Topologically, residues 151–216 are cytoplasmic; the sequence is KANDNGEGGT…ALETKGYLKT (66 aa). A helical transmembrane segment spans residues 217–237; it reads LLLLLVLMGTSMIIGDGILTP. The Extracellular portion of the chain corresponds to 238 to 253; the sequence is AMSVMSAMSGLQGEVK. A helical membrane pass occupies residues 254-274; it reads GFGTNALVMSSIVILVALFSI. Topologically, residues 275 to 281 are cytoplasmic; sequence QRFGTGK. The chain crosses the membrane as a helical span at residues 282-302; that stretch reads VGFLFAPVLALWFFSLGAIGI. Residues 303–335 are Extracellular-facing; it reads YNLLKYDFTVIRALNPFYIVLFFNKNSKQAWSA. The helical transmembrane segment at 336–356 threads the bilayer; the sequence is LGGCVLCITGAEAMFADLGHF. The Cytoplasmic portion of the chain corresponds to 357-363; that stretch reads SVRSIQM. A helical membrane pass occupies residues 364–384; the sequence is AFTCVVFPCLLLAYMGQAAYL. Topologically, residues 385–402 are extracellular; sequence TKHPEASARIFYDSVPKS. The helical transmembrane segment at 403–423 threads the bilayer; the sequence is LFWPVFVIATLAAMIASQAMI. Topologically, residues 424–454 are cytoplasmic; that stretch reads SATFSCVKQAMALGCFPRLKIIHTSKKRIGQ. A helical membrane pass occupies residues 455-475; sequence IYIPVINWFLMIMCILVVSIF. The Extracellular portion of the chain corresponds to 476–480; that stretch reads RSTTH. A run of 2 helical transmembrane segments spans residues 481 to 501 and 502 to 522; these read IANAYGIAEVGVMMVSTVLVT and LVMLLIWQTNIFLALCFPLIF. Over 523-536 the chain is Extracellular; sequence GSVETIYLLAVLTK. Residues 537-557 traverse the membrane as a helical segment; sequence ILEGGWVPLVFATFFLTVMYI. At 558–827 the chain is on the cytoplasmic side; it reads WNYGSVLKYQ…ILQAGMTYMV (270 aa). Residues 728-750 form a disordered region; sequence RSEPEQELDSEVLPSSSVGSSME. Over residues 738-748 the composition is skewed to low complexity; it reads EVLPSSSVGSS.

Belongs to the HAK/KUP transporter (TC 2.A.72.3) family.

The protein localises to the cell membrane. Putative potassium transporter. The protein is Putative potassium transporter 12 (POT12) of Arabidopsis thaliana (Mouse-ear cress).